The sequence spans 1594 residues: RB1-inducible coiled-coil protein 1 (1594 aa).

Residues Ser222, Ser229, and Ser237 each carry the phosphoserine modification. Thr238 carries the phosphothreonine modification. Residues Ser243, Ser253, Ser257, Ser261, and Ser266 each carry the phosphoserine modification. The Nuclear localization signal signature appears at 566-569; that stretch reads KPRK. Phosphoserine is present on residues Ser624, Ser647, Ser650, Ser652, Ser653, Ser734, Ser1091, Ser1222, Ser1370, and Ser1484. The segment at 638–673 is disordered; the sequence is EQKASVSQTSPQSASSPRMESTAGITTTTSPRTPPP. Low complexity predominate over residues 641–654; the sequence is ASVSQTSPQSASSP. The FFAT motif lies at 731–737; sequence DFMSAVN. Coiled coils occupy residues 859–1397 and 1438–1485; these read LKEK…SSSF and METS…SQSM.

Belongs to the ATG17 family. Part of a complex consisting of ATG13/KIAA0652, ULK1 and RB1CC1. This complex associates with ATG101. Interacts with PTK2/FAK1 and PTK2B/PYK2. Interacts with GABARAP and GABARAPL1. Interacts with ATG16L1; the interaction is required for ULK1 complex-dependent autophagy. Interacts with RNF111, SKI and SMAD7. Interacts with COP1 in the cytoplasm of proliferating cells in response to UV stimulation. Interacts with TP53. Interacts with C9orf72. Interacts with WDR45B. Interacts with ATG13; this interaction is increased in the absence of TMEM39A. Interacts with WIPI2. Interacts with TAX1BP1. Interacts (via phosphorylated FFAT motif) with MOSPD2, VAPA and VAPB. Post-translationally, phosphorylation at Ser-734 of the FFAT motif activates interaction with MOSPD2, VAPA and VAPB. As to expression, expression levels correlated closely with those of RB1 in cancer cell lines as well as in various normal human tissues. Abundantly expressed in human musculoskeletal and cultured osteosarcoma cells.

Its subcellular location is the nucleus. It is found in the cytoplasm. The protein localises to the cytosol. The protein resides in the preautophagosomal structure. It localises to the lysosome. Involved in autophagy. Regulates early events but also late events of autophagosome formation through direct interaction with Atg16L1. Required for the formation of the autophagosome-like double-membrane structure that surrounds the Salmonella-containing vacuole (SCV) during S.typhimurium infection and subsequent xenophagy. Involved in repair of DNA damage caused by ionizing radiation, which subsequently improves cell survival by decreasing apoptosis. Inhibits PTK2/FAK1 and PTK2B/PYK2 kinase activity, affecting their downstream signaling pathways. Plays a role as a modulator of TGF-beta-signaling by restricting substrate specificity of RNF111. Functions as a DNA-binding transcription factor. Is a potent regulator of the RB1 pathway through induction of RB1 expression. Plays a crucial role in muscular differentiation. Plays an indispensable role in fetal hematopoiesis and in the regulation of neuronal homeostasis. The chain is RB1-inducible coiled-coil protein 1 from Homo sapiens (Human).